Consider the following 304-residue polypeptide: Type II methyltransferase M.ScaI (304 aa).

This sequence belongs to the N(4)/N(6)-methyltransferase family. N(4) subfamily.

The enzyme catalyses a 2'-deoxycytidine in DNA + S-adenosyl-L-methionine = an N(4)-methyl-2'-deoxycytidine in DNA + S-adenosyl-L-homocysteine + H(+). A methylase that recognizes the double-stranded sequence 5'-AGTACT-3', methylates C-5 on both strands, and protects the DNA from cleavage by the ScaI endonuclease. In Streptomyces caespitosus, this protein is Type II methyltransferase M.ScaI.